The following is a 661-amino-acid chain: Transketolase (661 aa).

His28 contributes to the substrate binding site. Thiamine diphosphate-binding positions include His68 and 116–118 (GPL). Glu157 is a Mg(2+) binding site. Residues Gly158 and Asn187 each coordinate thiamine diphosphate. The Mg(2+) site is built by Asn187 and Ile189. Residues His261 and Arg358 each contribute to the substrate site. A thiamine diphosphate-binding site is contributed by His261. The active-site Proton donor is Glu412. Phe438 contacts thiamine diphosphate. His462, Asp470, and Arg521 together coordinate substrate.

Belongs to the transketolase family. In terms of assembly, homodimer. Mg(2+) is required as a cofactor. It depends on Ca(2+) as a cofactor. Mn(2+) serves as cofactor. The cofactor is Co(2+). Requires thiamine diphosphate as cofactor.

It carries out the reaction D-sedoheptulose 7-phosphate + D-glyceraldehyde 3-phosphate = aldehydo-D-ribose 5-phosphate + D-xylulose 5-phosphate. Catalyzes the transfer of a two-carbon ketol group from a ketose donor to an aldose acceptor, via a covalent intermediate with the cofactor thiamine pyrophosphate. The chain is Transketolase (tkt) from Treponema pallidum (strain Nichols).